A 447-amino-acid chain; its full sequence is UDP-N-acetylglucosamine 1-carboxyvinyltransferase (447 aa).

Residue 27–28 coordinates phosphoenolpyruvate; that stretch reads KN. Arg97 contributes to the UDP-N-acetyl-alpha-D-glucosamine binding site. Cys121 functions as the Proton donor in the catalytic mechanism. At Cys121 the chain carries 2-(S-cysteinyl)pyruvic acid O-phosphothioketal. Residues 126-130, Asp314, and Val336 each bind UDP-N-acetyl-alpha-D-glucosamine; that span reads RPVDL.

This sequence belongs to the EPSP synthase family. MurA subfamily.

Its subcellular location is the cytoplasm. The enzyme catalyses phosphoenolpyruvate + UDP-N-acetyl-alpha-D-glucosamine = UDP-N-acetyl-3-O-(1-carboxyvinyl)-alpha-D-glucosamine + phosphate. It functions in the pathway cell wall biogenesis; peptidoglycan biosynthesis. Its function is as follows. Cell wall formation. Adds enolpyruvyl to UDP-N-acetylglucosamine. The protein is UDP-N-acetylglucosamine 1-carboxyvinyltransferase of Nostoc sp. (strain PCC 7120 / SAG 25.82 / UTEX 2576).